Here is a 240-residue protein sequence, read N- to C-terminus: UDP-2,3-diacylglucosamine hydrolase (240 aa).

5 residues coordinate Mn(2+): Asp9, His11, Asp43, Asn81, and His116. 81 to 82 (NR) is a binding site for substrate. The substrate site is built by Asp124, Ser162, Lys166, Lys169, and His197. Mn(2+) is bound by residues His197 and His199.

The protein belongs to the LpxH family. Mn(2+) serves as cofactor.

The protein resides in the cell inner membrane. It catalyses the reaction UDP-2-N,3-O-bis[(3R)-3-hydroxytetradecanoyl]-alpha-D-glucosamine + H2O = 2-N,3-O-bis[(3R)-3-hydroxytetradecanoyl]-alpha-D-glucosaminyl 1-phosphate + UMP + 2 H(+). Its pathway is glycolipid biosynthesis; lipid IV(A) biosynthesis; lipid IV(A) from (3R)-3-hydroxytetradecanoyl-[acyl-carrier-protein] and UDP-N-acetyl-alpha-D-glucosamine: step 4/6. Its function is as follows. Hydrolyzes the pyrophosphate bond of UDP-2,3-diacylglucosamine to yield 2,3-diacylglucosamine 1-phosphate (lipid X) and UMP by catalyzing the attack of water at the alpha-P atom. Involved in the biosynthesis of lipid A, a phosphorylated glycolipid that anchors the lipopolysaccharide to the outer membrane of the cell. The chain is UDP-2,3-diacylglucosamine hydrolase from Neisseria meningitidis serogroup C / serotype 2a (strain ATCC 700532 / DSM 15464 / FAM18).